The chain runs to 86 residues: Small ribosomal subunit protein uS15c (86 aa).

This sequence belongs to the universal ribosomal protein uS15 family. Part of the 30S ribosomal subunit.

The protein resides in the plastid. The polypeptide is Small ribosomal subunit protein uS15c (rps15) (Cuscuta obtusiflora (Peruvian dodder)).